The primary structure comprises 201 residues: Superoxide dismutase [Mn/Fe] (201 aa).

His-27, His-75, Asp-161, and His-165 together coordinate Fe(3+). Mn(2+)-binding residues include His-27, His-75, Asp-161, and His-165.

This sequence belongs to the iron/manganese superoxide dismutase family. Homotetramer. Mn(2+) serves as cofactor. The cofactor is Fe(3+).

The enzyme catalyses 2 superoxide + 2 H(+) = H2O2 + O2. Shows decreasing activity with increasing pH. Slightly inhibited by azide and fluoride at pH 7-8; the inhibition is drastically increased towards lower pH. Functionally, destroys superoxide anion radicals which are normally produced within the cells and which are toxic to biological systems. Catalyzes the dismutation of superoxide anion radicals into O2 and H2O2 by successive reduction and oxidation of the transition metal ion at the active site. This is Superoxide dismutase [Mn/Fe] (sodA) from Propionibacterium freudenreichii subsp. shermanii.